Reading from the N-terminus, the 99-residue chain is Ubiquitin-related modifier 1 homolog (99 aa).

At G99 the chain carries 1-thioglycine. G99 participates in a covalent cross-link: Glycyl lysine isopeptide (Gly-Lys) (interchain with K-? in acceptor proteins).

The protein belongs to the URM1 family. In terms of assembly, interacts with cer. In terms of processing, C-terminal thiocarboxylation occurs in 2 steps, it is first acyl-adenylated (-COAMP) via the hesA/moeB/thiF part of the MOCS3 homolog, then thiocarboxylated (-COSH) via the rhodanese domain of the MOCS3 homolog.

It is found in the cytoplasm. It functions in the pathway tRNA modification; 5-methoxycarbonylmethyl-2-thiouridine-tRNA biosynthesis. In terms of biological role, acts as a sulfur carrier required for 2-thiolation of mcm(5)S(2)U at tRNA wobble positions of cytosolic tRNA(Lys), tRNA(Glu) and tRNA(Gln). Serves as sulfur donor in tRNA 2-thiolation reaction by being thiocarboxylated (-COSH) at its C-terminus by MOCS3. The sulfur is then transferred to tRNA to form 2-thiolation of mcm(5)S(2)U. Also acts as a ubiquitin-like protein (UBL) that is covalently conjugated via an isopeptide bond to lysine residues of target proteins such as Prx2/Jafrac1, Ciao1, Eip71CD and GILT1. The thiocarboxylated form serves as substrate for conjugation and oxidative stress specifically induces the formation of UBL-protein conjugates. In Drosophila virilis (Fruit fly), this protein is Ubiquitin-related modifier 1 homolog.